The sequence spans 373 residues: GPN-loop GTPase 1 (373 aa).

Position 2 is an N-acetylalanine (Ala-2). Gly-29–Thr-34 is a binding site for GTP. A Gly-Pro-Asn (GPN)-loop; involved in dimer interface motif is present at residues Gly-86 to Asn-88. Position 189 to 192 (Asn-189 to Asp-192) interacts with GTP. Residues Ser-301, Ser-312, and Ser-314 each carry the phosphoserine modification. Positions Leu-304 to Lys-373 are disordered. Position 328 is a phosphothreonine (Thr-328). Over residues Asp-330–Asp-342 the composition is skewed to acidic residues. At Ser-338 the chain carries Phosphoserine. At Thr-340 the chain carries Phosphothreonine. The span at Ile-343–Pro-355 shows a compositional bias: basic and acidic residues.

The protein belongs to the GPN-loop GTPase family. In terms of assembly, heterodimer with GPN3. Binds to RNA polymerase II (RNAPII). Interacts directly with RNAPII subunits RPB4 and RPB7 and the CTD of RPB1. Interacts with XPA.

Its subcellular location is the cytoplasm. The protein localises to the nucleus. Functionally, small GTPase required for proper nuclear import of RNA polymerase II (RNAPII). May act at an RNAP assembly step prior to nuclear import. Forms an interface between the RNA polymerase II enzyme and chaperone/scaffolding proteins, suggesting that it is required to connect RNA polymerase II to regulators of protein complex formation. May be involved in nuclear localization of XPA. The polypeptide is GPN-loop GTPase 1 (Bos taurus (Bovine)).